A 356-amino-acid polypeptide reads, in one-letter code: Histidinol-phosphate aminotransferase (356 aa).

An N6-(pyridoxal phosphate)lysine modification is found at Lys214.

This sequence belongs to the class-II pyridoxal-phosphate-dependent aminotransferase family. Histidinol-phosphate aminotransferase subfamily. Homodimer. Pyridoxal 5'-phosphate serves as cofactor.

It catalyses the reaction L-histidinol phosphate + 2-oxoglutarate = 3-(imidazol-4-yl)-2-oxopropyl phosphate + L-glutamate. The protein operates within amino-acid biosynthesis; L-histidine biosynthesis; L-histidine from 5-phospho-alpha-D-ribose 1-diphosphate: step 7/9. The chain is Histidinol-phosphate aminotransferase from Shigella boydii serotype 18 (strain CDC 3083-94 / BS512).